The following is an 89-amino-acid chain: Cytochrome b (89 aa).

2 consecutive transmembrane segments (helical) span residues 38–58 (FGPL…FLAM) and 82–89 (WLLRYMHA). Residue H88 coordinates heme b.

It belongs to the cytochrome b family. As to quaternary structure, the main subunits of complex b-c1 are: cytochrome b, cytochrome c1 and the Rieske protein. Requires heme b as cofactor.

It is found in the mitochondrion inner membrane. Its function is as follows. Component of the ubiquinol-cytochrome c reductase complex (complex III or cytochrome b-c1 complex) that is part of the mitochondrial respiratory chain. The b-c1 complex mediates electron transfer from ubiquinol to cytochrome c. Contributes to the generation of a proton gradient across the mitochondrial membrane that is then used for ATP synthesis. The chain is Cytochrome b (MT-CYB) from Brassica napus (Rape).